The chain runs to 200 residues: Cytochrome c biogenesis ATP-binding export protein CcmA (200 aa).

The 198-residue stretch at 3-200 (LSGRGLRCVR…AREMRIGAAA (198 aa)) folds into the ABC transporter domain. 35–42 (GHNGAGKT) is a binding site for ATP.

Belongs to the ABC transporter superfamily. CcmA exporter (TC 3.A.1.107) family. As to quaternary structure, the complex is composed of two ATP-binding proteins (CcmA) and two transmembrane proteins (CcmB).

It is found in the cell inner membrane. The catalysed reaction is heme b(in) + ATP + H2O = heme b(out) + ADP + phosphate + H(+). In terms of biological role, part of the ABC transporter complex CcmAB involved in the biogenesis of c-type cytochromes; once thought to export heme, this seems not to be the case, but its exact role is uncertain. Responsible for energy coupling to the transport system. This Rhodopseudomonas palustris (strain BisB5) protein is Cytochrome c biogenesis ATP-binding export protein CcmA.